Reading from the N-terminus, the 492-residue chain is Protein odr-4 homolog (492 aa).

A disordered region spans residues 251-270 (LQPTSTTGGTATASSNTTDS). Over residues 254–268 (TSTTGGTATASSNTT) the composition is skewed to low complexity. The chain crosses the membrane as a helical span at residues 469–489 (MVGIAVALLVLLSSVALHFVL).

Belongs to the ODR-4 family.

It localises to the membrane. In terms of biological role, may play a role in the trafficking of a subset of G-protein coupled receptors. The polypeptide is Protein odr-4 homolog (Drosophila melanogaster (Fruit fly)).